The primary structure comprises 458 residues: Argininosuccinate lyase (458 aa).

It belongs to the lyase 1 family. Argininosuccinate lyase subfamily.

Its subcellular location is the cytoplasm. The enzyme catalyses 2-(N(omega)-L-arginino)succinate = fumarate + L-arginine. The protein operates within amino-acid biosynthesis; L-arginine biosynthesis; L-arginine from L-ornithine and carbamoyl phosphate: step 3/3. This chain is Argininosuccinate lyase, found in Neisseria meningitidis serogroup C (strain 053442).